A 213-amino-acid polypeptide reads, in one-letter code: Uridine kinase (213 aa).

13–20 (GGSCSGKT) contributes to the ATP binding site.

This sequence belongs to the uridine kinase family.

It localises to the cytoplasm. The catalysed reaction is uridine + ATP = UMP + ADP + H(+). It catalyses the reaction cytidine + ATP = CMP + ADP + H(+). Its pathway is pyrimidine metabolism; CTP biosynthesis via salvage pathway; CTP from cytidine: step 1/3. The protein operates within pyrimidine metabolism; UMP biosynthesis via salvage pathway; UMP from uridine: step 1/1. The chain is Uridine kinase (udk) from Mycoplasma pneumoniae (strain ATCC 29342 / M129 / Subtype 1) (Mycoplasmoides pneumoniae).